The primary structure comprises 572 residues: Squalene monooxygenase (572 aa).

Topologically, residues 1-19 (MWTFLGIATFTYFYKKCGD) are cytoplasmic. An interaction with MARCHF6 region spans residues 1 to 98 (MWTFLGIATF…EQLESKKCRK (98 aa)). Residues 20–40 (VTLANKELLLCVLVFLSLGLV) lie within the membrane without spanning it. Topologically, residues 41-572 (LSYRCRHRHG…IYSEMKYLVH (532 aa)) are cytoplasmic. The segment at 61–72 (QFAAFSDILSAL) is required for degradation in response to high membrane cholesterol levels. The sufficient for enzyme activity stretch occupies residues 116-572 (TSFVTDPEVI…IYSEMKYLVH (457 aa)). Residues 131–132 (VL), 151–152 (ER), Arg159, Arg232, Val248, Asp406, and Met419 each bind FAD. Positions 514-572 (PLVLIRHFFSVAIYATYFCFKSEPWATKPRALFSSGAVLYKACSILFPLIYSEMKYLVH) are hydrophobic; mediates interaction with membranes.

Belongs to the squalene monooxygenase family. In terms of assembly, interacts (via N-terminal domain) with MARCHF6. Interacts with SMIM22; this interaction modulates lipid droplet formation. It depends on FAD as a cofactor. In terms of processing, ubiquitinated by MARCHF6 in response to high cholesterol levels in intracellular membranes, leading to proteasomal degradation. As to expression, detected in liver.

It is found in the microsome membrane. It localises to the endoplasmic reticulum membrane. The enzyme catalyses squalene + reduced [NADPH--hemoprotein reductase] + O2 = (S)-2,3-epoxysqualene + oxidized [NADPH--hemoprotein reductase] + H2O + H(+). It functions in the pathway terpene metabolism; lanosterol biosynthesis; lanosterol from farnesyl diphosphate: step 2/3. Its function is as follows. Catalyzes the stereospecific oxidation of squalene to (S)-2,3-epoxysqualene, and is considered to be a rate-limiting enzyme in steroid biosynthesis. The sequence is that of Squalene monooxygenase (Sqle) from Mus musculus (Mouse).